Consider the following 357-residue polypeptide: Putative electron transport protein YccM (357 aa).

Topologically, residues 1–36 (MAENKRTRWQRRPGTTGGKLPWNDWRNATTWRKATQ) are cytoplasmic. The helical transmembrane segment at 37 to 54 (LLLLAMNIYIAITFWYWV) threads the bilayer. Residues 55 to 91 (RYYETASSTTFVARPGGIEGWLPIAGLMNLKYSLVTG) are Periplasmic-facing. The helical transmembrane segment at 92–114 (QLPSVHAAAMLLLVAFIVISLLL) threads the bilayer. Topologically, residues 115–158 (KKAFCSWLCPVGTLSELIGDLGNKLFGRQCVLPRWLDIPLRGVK) are cytoplasmic. Residues 159 to 181 (YLLLSFFIYIALLMPAQAIHYFM) traverse the membrane as a helical segment. The Periplasmic segment spans residues 182–195 (LSPYSVVMDVKMLD). Residues 196–218 (FFRHMGTATLISVTVLLIASLFI) form a helical membrane-spanning segment. Residues 219–309 (RHAWCRYLCP…KPAANKKAFA (91 aa)) lie on the Cytoplasmic side of the membrane. 4Fe-4S ferredoxin-type domains are found at residues 242 to 270 (FKIR…VDKL) and 269 to 299 (KLIQ…FSLQ). Residues cysteine 251, cysteine 254, cysteine 257, cysteine 261, cysteine 278, cysteine 281, cysteine 284, and cysteine 288 each contribute to the [4Fe-4S] cluster site. A helical transmembrane segment spans residues 310-332 (LSGWLMTLLVLGIMFAVIGYAMY). The Periplasmic segment spans residues 333–357 (AGVWQSPVPEELYRRLIPQAPMIGH).

It is found in the cell inner membrane. The chain is Putative electron transport protein YccM (yccM) from Escherichia coli (strain K12).